The chain runs to 75 residues: Small ribosomal subunit protein bS18 (75 aa).

This sequence belongs to the bacterial ribosomal protein bS18 family. As to quaternary structure, part of the 30S ribosomal subunit. Forms a tight heterodimer with protein bS6.

In terms of biological role, binds as a heterodimer with protein bS6 to the central domain of the 16S rRNA, where it helps stabilize the platform of the 30S subunit. In Rhodobacter capsulatus (strain ATCC BAA-309 / NBRC 16581 / SB1003), this protein is Small ribosomal subunit protein bS18 (rbsR).